We begin with the raw amino-acid sequence, 623 residues long: Putative pentatricopeptide repeat-containing protein At3g11460, mitochondrial (623 aa).

Residues M1–S35 constitute a mitochondrion transit peptide. 12 PPR repeats span residues A17–P51, D52–T86, E87–S117, L120–V154, D155–S189, E190–K220, G221–P255, D256–P290, N291–K321, S322–P356, D357–E387, and G393–E423. The tract at residues V428 to K503 is type E motif. The tract at residues G504–E535 is type E(+) motif. The interval L536–W623 is type DYW motif.

It belongs to the PPR family. PCMP-H subfamily. In terms of assembly, interacts with MORF8/RIP1.

It is found in the mitochondrion. Functionally, involved in C-to-U editing of mitochondrial RNA. Required specifically for editing the mitochondrial NAD2 transcript. The polypeptide is Putative pentatricopeptide repeat-containing protein At3g11460, mitochondrial (PCMP-H52) (Arabidopsis thaliana (Mouse-ear cress)).